A 249-amino-acid polypeptide reads, in one-letter code: Phosphate import ATP-binding protein PstB 2 (249 aa).

The region spanning 4-244 is the ABC transporter domain; it reads FDIENLDLYY…PSDDRTRGYV (241 aa). 36–43 provides a ligand contact to ATP; that stretch reads GPSGCGKS.

The protein belongs to the ABC transporter superfamily. Phosphate importer (TC 3.A.1.7) family. As to quaternary structure, the complex is composed of two ATP-binding proteins (PstB), two transmembrane proteins (PstC and PstA) and a solute-binding protein (PstS).

The protein localises to the cell inner membrane. The catalysed reaction is phosphate(out) + ATP + H2O = ADP + 2 phosphate(in) + H(+). In terms of biological role, part of the ABC transporter complex PstSACB involved in phosphate import. Responsible for energy coupling to the transport system. This Vibrio vulnificus (strain CMCP6) protein is Phosphate import ATP-binding protein PstB 2.